The chain runs to 121 residues: Small ribosomal subunit protein uS13 (121 aa).

Residues 97-121 (VRGQRTRTNARTRRGARKTVAGRKK) are disordered. A compositionally biased stretch (basic residues) spans 100 to 121 (QRTRTNARTRRGARKTVAGRKK).

This sequence belongs to the universal ribosomal protein uS13 family. In terms of assembly, part of the 30S ribosomal subunit. Forms a loose heterodimer with protein S19. Forms two bridges to the 50S subunit in the 70S ribosome.

Located at the top of the head of the 30S subunit, it contacts several helices of the 16S rRNA. In the 70S ribosome it contacts the 23S rRNA (bridge B1a) and protein L5 of the 50S subunit (bridge B1b), connecting the 2 subunits; these bridges are implicated in subunit movement. Contacts the tRNAs in the A and P-sites. The chain is Small ribosomal subunit protein uS13 from Prochlorococcus marinus (strain NATL1A).